Reading from the N-terminus, the 92-residue chain is Small nuclear ribonucleoprotein E (92 aa).

The Sm domain occupies 18–92; it reads INLIFRYLQN…NITLLQSVSN (75 aa).

It belongs to the snRNP Sm proteins family. In terms of assembly, core component of the spliceosomal U1, U2, U4 and U5 small nuclear ribonucleoproteins (snRNPs), the building blocks of the spliceosome. Most spliceosomal snRNPs contain a common set of Sm proteins, SNRPB, SNRPD1, SNRPD2, SNRPD3, SNRPE, SNRPF and SNRPG that assemble in a heptameric protein ring on the Sm site of the small nuclear RNA to form the core snRNP. Component of the U1 snRNP. The U1 snRNP is composed of the U1 snRNA and the 7 core Sm proteins SNRPB, SNRPD1, SNRPD2, SNRPD3, SNRPE, SNRPF and SNRPG, and at least three U1 snRNP-specific proteins SNRNP70/U1-70K, SNRPA/U1-A and SNRPC/U1-C. Component of the U4/U6-U5 tri-snRNP complex composed of the U4, U6 and U5 snRNAs and at least PRPF3, PRPF4, PRPF6, PRPF8, PRPF31, SNRNP200, TXNL4A, SNRNP40, SNRPB, SNRPD1, SNRPD2, SNRPD3, SNRPE, SNRPF, SNRPG, DDX23, CD2BP2, PPIH, SNU13, EFTUD2, SART1 and USP39, plus LSM2, LSM3, LSM4, LSM5, LSM6, LSM7 and LSM8. Component of the U7 snRNP complex, or U7 Sm protein core complex, that is composed of the U7 snRNA and at least LSM10, LSM11, SNRPB, SNRPD3, SNRPE, SNRPF and SNRPG; the complex does not contain SNRPD1 and SNRPD2. Component of the minor spliceosome, which splices U12-type introns. Part of the SMN-Sm complex that contains SMN1, GEMIN2/SIP1, DDX20/GEMIN3, GEMIN4, GEMIN5, GEMIN6, GEMIN7, GEMIN8, STRAP/UNRIP and the Sm proteins SNRPB, SNRPD1, SNRPD2, SNRPD3, SNRPE, SNRPF and SNRPG; catalyzes core snRNPs assembly. Forms a 6S pICln-Sm complex composed of CLNS1A/pICln, SNRPD1, SNRPD2, SNRPE, SNRPF and SNRPG; ring-like structure where CLNS1A/pICln mimics additional Sm proteins and which is unable to assemble into the core snRNP. Interacts with SMN1; the interaction is direct. Interacts with GEMIN2 (via N-terminus); the interaction is direct. Interacts with SNRPF; the interaction is direct. Interacts with SNRPG; the interaction is direct.

It localises to the cytoplasm. It is found in the cytosol. The protein localises to the nucleus. Its function is as follows. Plays a role in pre-mRNA splicing as a core component of the spliceosomal U1, U2, U4 and U5 small nuclear ribonucleoproteins (snRNPs), the building blocks of the spliceosome. Component of both the pre-catalytic spliceosome B complex and activated spliceosome C complexes. As a component of the minor spliceosome, involved in the splicing of U12-type introns in pre-mRNAs. As part of the U7 snRNP it is involved in histone 3'-end processing. The protein is Small nuclear ribonucleoprotein E (SNRPE) of Bos taurus (Bovine).